The chain runs to 61 residues: uncharacterized protein (61 aa).

2 consecutive transmembrane segments (helical) span residues 5–25 (MLYF…SLLL) and 29–49 (YILT…PWYT).

Its subcellular location is the membrane. This is an uncharacterized protein from Saccharomyces cerevisiae (strain ATCC 204508 / S288c) (Baker's yeast).